The chain runs to 138 residues: Putative nickel-responsive regulator (138 aa).

His78, His89, His91, and Cys97 together coordinate Ni(2+).

This sequence belongs to the transcriptional regulatory CopG/NikR family. Requires Ni(2+) as cofactor.

Transcriptional regulator. In Thermococcus onnurineus (strain NA1), this protein is Putative nickel-responsive regulator.